Here is a 1421-residue protein sequence, read N- to C-terminus: Cytoadherence-linked asexual protein 3.2 (1421 aa).

The first 24 residues, 1-24 (MVSFFKTPIIIFFFLLCLNEKVLC), serve as a signal peptide directing secretion. 4 cysteine pairs are disulfide-bonded: Cys-335–Cys-363, Cys-409–Cys-415, Cys-519–Cys-547, and Cys-523–Cys-544. A helical transmembrane segment spans residues 1203–1223 (NFFMELANGFMYAFCFFAISQ). Cys-1352 and Cys-1355 form a disulfide bridge. The tract at residues 1371-1413 (GDKNTNETTEIKKQTSTYIDTEKMNEADSADSDDEKDFDTPDN) is disordered. A compositionally biased stretch (acidic residues) spans 1398–1412 (DSADSDDEKDFDTPD).

Component of the RhopH complex. RhopH complex is at least composed of CLAG3.1/CLAG3.2, RhopH2 and RhopH3 with a 1:1:1 subunit stoichiometry. CLAG3.1/CLAG3.2 mediates subunit association through independent contacts with RhopH2 and RhopH3, which do not directly interact with one another. Interacts with RhopH2. Interacts with RhopH3.

It localises to the host cell membrane. It is found in the parasitophorous vacuole membrane. The protein localises to the host cytoplasm. The protein resides in the cytoplasmic vesicle. Its subcellular location is the secretory vesicle. It localises to the rhoptry. Functionally, participates in the formation of new permeability pathways in Plasmodium-infected erythrocytes enabling the uptake of nutrients from the blood plasma. This Plasmodium falciparum protein is Cytoadherence-linked asexual protein 3.2.